The following is a 199-amino-acid chain: Putative pseudouridine methyltransferase (199 aa).

S-adenosyl-L-methionine is bound by residues Leu132 and Cys186.

Belongs to the methyltransferase superfamily. TrmY family.

Its subcellular location is the cytoplasm. In Vibrio parahaemolyticus serotype O3:K6 (strain RIMD 2210633), this protein is Putative pseudouridine methyltransferase.